We begin with the raw amino-acid sequence, 384 residues long: Probable RNA 3'-terminal phosphate cyclase-like protein (384 aa).

The protein belongs to the RNA 3'-terminal cyclase family. Type 2 subfamily. As to quaternary structure, part of the small subunit (SSU) processome, composed of more than 70 proteins and the RNA chaperone small nucleolar RNA (snoRNA) U3.

It localises to the nucleus. It is found in the nucleolus. In terms of biological role, part of the small subunit (SSU) processome, first precursor of the small eukaryotic ribosomal subunit. During the assembly of the SSU processome in the nucleolus, many ribosome biogenesis factors, an RNA chaperone and ribosomal proteins associate with the nascent pre-rRNA and work in concert to generate RNA folding, modifications, rearrangements and cleavage as well as targeted degradation of pre-ribosomal RNA by the RNA exosome. Does not have cyclase activity. The sequence is that of Probable RNA 3'-terminal phosphate cyclase-like protein (Rtc1) from Drosophila melanogaster (Fruit fly).